We begin with the raw amino-acid sequence, 341 residues long: tRNA N6-adenosine threonylcarbamoyltransferase (341 aa).

Fe cation contacts are provided by His111 and His115. Residues 134 to 138, Asp167, Gly180, and Asn276 contribute to the substrate site; that span reads LVSGG. Asp304 is a Fe cation binding site.

It belongs to the KAE1 / TsaD family. Fe(2+) serves as cofactor.

It is found in the cytoplasm. It carries out the reaction L-threonylcarbamoyladenylate + adenosine(37) in tRNA = N(6)-L-threonylcarbamoyladenosine(37) in tRNA + AMP + H(+). Functionally, required for the formation of a threonylcarbamoyl group on adenosine at position 37 (t(6)A37) in tRNAs that read codons beginning with adenine. Is involved in the transfer of the threonylcarbamoyl moiety of threonylcarbamoyl-AMP (TC-AMP) to the N6 group of A37, together with TsaE and TsaB. TsaD likely plays a direct catalytic role in this reaction. This Azotobacter vinelandii (strain DJ / ATCC BAA-1303) protein is tRNA N6-adenosine threonylcarbamoyltransferase.